A 156-amino-acid chain; its full sequence is Transcription elongation factor GreA (156 aa).

A coiled-coil region spans residues 8–75 (LTKEGYEKLK…ELENMLSKAE (68 aa)).

Belongs to the GreA/GreB family.

Functionally, necessary for efficient RNA polymerase transcription elongation past template-encoded arresting sites. The arresting sites in DNA have the property of trapping a certain fraction of elongating RNA polymerases that pass through, resulting in locked ternary complexes. Cleavage of the nascent transcript by cleavage factors such as GreA or GreB allows the resumption of elongation from the new 3'terminus. GreA releases sequences of 2 to 3 nucleotides. This chain is Transcription elongation factor GreA, found in Thermosipho melanesiensis (strain DSM 12029 / CIP 104789 / BI429).